The primary structure comprises 736 residues: Microtubule-associated protein mu-2 (736 aa).

Belongs to the orthoreovirus mu-2 protein family. As to quaternary structure, interacts with protein mu-NS; in viral inclusions. Interacts with polymerase lambda-3; this interaction stimulates the ATPase activity of mu-2. A divalent metal cation serves as cofactor.

The protein resides in the virion. It is found in the host cytoplasm. Its subcellular location is the host cytoskeleton. Minor inner capsid (core) component. Displays NTPase and RNA 5'-triphosphatase (RTPase) activities. ATP is the preferred substrate for hydrolysis. May function as a cofactor of polymerase lambda-3. Associates with microtubules and plays a role in the formation, structural organization and morphology of viral inclusions, where the assembly of cores and the replication of viral RNA occur. Together with mu-NS, recruits the other core proteins to these inclusions. In Mammalia (T1L), this protein is Microtubule-associated protein mu-2 (M1).